A 139-amino-acid polypeptide reads, in one-letter code: MHEWALADAIVRTALDYAQKENASKILAIKVVLGELQDVNAEVVEFAMKELLRGTIGEGAEIIFEEEEAVFRCRNCGHEWKLKEVKDKLDERIREDIHFIPEVVHAFISCPNCGSHDFEVVKGRGVYIAGIKIEKEEGE.

His-2 contacts Ni(2+). Residues Cys-73, Cys-76, Cys-110, and Cys-113 each contribute to the Zn(2+) site.

Belongs to the HypA/HybF family.

Its function is as follows. Involved in the maturation of [NiFe] hydrogenases. Required for nickel insertion into the metal center of the hydrogenase. In Pyrococcus abyssi (strain GE5 / Orsay), this protein is Hydrogenase maturation factor HypA.